Reading from the N-terminus, the 225-residue chain is Octanoyltransferase (225 aa).

Residues glycine 43–glycine 225 enclose the BPL/LPL catalytic domain. Substrate contacts are provided by residues arginine 82 to histidine 89, alanine 157 to glycine 159, and glycine 170 to serine 172. Residue cysteine 188 is the Acyl-thioester intermediate of the active site.

Belongs to the LipB family.

The protein resides in the cytoplasm. It catalyses the reaction octanoyl-[ACP] + L-lysyl-[protein] = N(6)-octanoyl-L-lysyl-[protein] + holo-[ACP] + H(+). It functions in the pathway protein modification; protein lipoylation via endogenous pathway; protein N(6)-(lipoyl)lysine from octanoyl-[acyl-carrier-protein]: step 1/2. Functionally, catalyzes the transfer of endogenously produced octanoic acid from octanoyl-acyl-carrier-protein onto the lipoyl domains of lipoate-dependent enzymes. Lipoyl-ACP can also act as a substrate although octanoyl-ACP is likely to be the physiological substrate. The sequence is that of Octanoyltransferase from Parvibaculum lavamentivorans (strain DS-1 / DSM 13023 / NCIMB 13966).